Reading from the N-terminus, the 352-residue chain is MSVAGLKKQFHKATQKVSEKVGGAEGTKLDDDFKEMERKVDVTSRAVMEIMTKTIEYLQPNPASRAKLSMINTMSKIRGQEKGPGYPQAEALLAEAMLKFGRELGDDCNFGPALGEVGEAMRELSEVKDSLDMEVKQNFIDPLQNLHDKDLREIQHHLKKLEGRRLDFDYKKKRQGKIPDEELRQALEKFDESKEIAESSMFNLLEMDIEQVSQLSALVQAQLEYHKQAVQILQQVTVRLEERIRQASSQPRREYQPKPRMSLEFATGDSTQPNGGLSHTGTPKPPGVQMDQPCCRALYDFEPENEGELGFKEGDIITLTNQIDENWYEGMLHGQSGFFPINYVEILVALPH.

The tract at residues Met1–Val21 is membrane-binding amphipathic helix. Residues Met1–Thr27 are disordered. Residues Met1–Ser125 are binds and tubulates liposomes. In terms of domain architecture, BAR spans Ser18–Ser249. A required for dimerization upon membrane association region spans residues Pro60–Pro87. The stretch at Glu181 to Ser248 forms a coiled coil. Residue Ser262 is modified to Phosphoserine. The interval Glu264–Gln289 is disordered. Over residues Gly268–Gly281 the composition is skewed to polar residues. Positions Met290–Ala349 constitute an SH3 domain. At Tyr299 the chain carries Phosphotyrosine.

Belongs to the endophilin family. In terms of assembly, monomer; in cytoplasm. Homodimer; when associated with membranes. Interacts with SYNJ1. Interacts with DNM1. Interacts with MAP4K3; the interaction appears to regulate MAP4K3-mediated JNK activation. Interacts with OPHN1. Interacts with PDCD6IP. Interacts with BIN2. Interacts with ATXN2. Interacts with ADAM9 and ADAM15 cytoplasmic tails. Interacts with TMEM108. Interacts with ADGRB2.

The protein localises to the cytoplasm. Its subcellular location is the membrane. It localises to the early endosome. The protein resides in the presynapse. Implicated in synaptic vesicle endocytosis. May recruit other proteins to membranes with high curvature. Required for BDNF-dependent dendrite outgrowth. Cooperates with SH3GL2 to mediate BDNF-NTRK2 early endocytic trafficking and signaling from early endosomes. This chain is Endophilin-A1 (Sh3gl2), found in Mus musculus (Mouse).